Here is a 227-residue protein sequence, read N- to C-terminus: Leucyl/phenylalanyl-tRNA--protein transferase (227 aa).

This sequence belongs to the L/F-transferase family.

The protein resides in the cytoplasm. It carries out the reaction N-terminal L-lysyl-[protein] + L-leucyl-tRNA(Leu) = N-terminal L-leucyl-L-lysyl-[protein] + tRNA(Leu) + H(+). It catalyses the reaction N-terminal L-arginyl-[protein] + L-leucyl-tRNA(Leu) = N-terminal L-leucyl-L-arginyl-[protein] + tRNA(Leu) + H(+). The catalysed reaction is L-phenylalanyl-tRNA(Phe) + an N-terminal L-alpha-aminoacyl-[protein] = an N-terminal L-phenylalanyl-L-alpha-aminoacyl-[protein] + tRNA(Phe). In terms of biological role, functions in the N-end rule pathway of protein degradation where it conjugates Leu, Phe and, less efficiently, Met from aminoacyl-tRNAs to the N-termini of proteins containing an N-terminal arginine or lysine. The sequence is that of Leucyl/phenylalanyl-tRNA--protein transferase from Desulfotalea psychrophila (strain LSv54 / DSM 12343).